Consider the following 340-residue polypeptide: S-adenosylmethionine:tRNA ribosyltransferase-isomerase (340 aa).

The protein belongs to the QueA family. Monomer.

Its subcellular location is the cytoplasm. The catalysed reaction is 7-aminomethyl-7-carbaguanosine(34) in tRNA + S-adenosyl-L-methionine = epoxyqueuosine(34) in tRNA + adenine + L-methionine + 2 H(+). Its pathway is tRNA modification; tRNA-queuosine biosynthesis. In terms of biological role, transfers and isomerizes the ribose moiety from AdoMet to the 7-aminomethyl group of 7-deazaguanine (preQ1-tRNA) to give epoxyqueuosine (oQ-tRNA). This is S-adenosylmethionine:tRNA ribosyltransferase-isomerase from Campylobacter concisus (strain 13826).